The sequence spans 345 residues: tRNA dimethylallyltransferase (345 aa).

Gly-9–Ser-16 is a binding site for ATP. Thr-11–Ser-16 is a substrate binding site. 2 interaction with substrate tRNA regions span residues Asp-34–Gln-37 and Gln-195–Arg-199.

It belongs to the IPP transferase family. As to quaternary structure, monomer. Mg(2+) serves as cofactor.

It carries out the reaction adenosine(37) in tRNA + dimethylallyl diphosphate = N(6)-dimethylallyladenosine(37) in tRNA + diphosphate. In terms of biological role, catalyzes the transfer of a dimethylallyl group onto the adenine at position 37 in tRNAs that read codons beginning with uridine, leading to the formation of N6-(dimethylallyl)adenosine (i(6)A). The chain is tRNA dimethylallyltransferase from Orientia tsutsugamushi (strain Boryong) (Rickettsia tsutsugamushi).